The primary structure comprises 289 residues: MTQIADPSILFPPLVKGAAQAITDYRMIEEGDRVMVCLSGGKDSYTLLDILLHLQKRAPIHFEVVAVNLDQGQPGFPKHVLPEYLTRLGVPFDILTEDTYSIVKEKTPEGKTTCALCSRLRRGILYRHAREIGATKIALGHHRDDILETLFMNMFFGARLKAMPPKLQSDDGTNVVIRPLAYLAERDIERYAQAKGFPIIPCNLCGSQPNLQRRVVGEMLEGWEREHPGRLQNILRSLTRVTPSHLLDRDLYDFAGLSVTPAEGDRGFDGEEYPEREFLAGLSNLTLLG.

The PP-loop motif signature appears at 39–44 (SGGKDS). Positions 114, 117, and 205 each coordinate [4Fe-4S] cluster.

Belongs to the TtcA family. As to quaternary structure, homodimer. Requires Mg(2+) as cofactor. It depends on [4Fe-4S] cluster as a cofactor.

Its subcellular location is the cytoplasm. The catalysed reaction is cytidine(32) in tRNA + S-sulfanyl-L-cysteinyl-[cysteine desulfurase] + AH2 + ATP = 2-thiocytidine(32) in tRNA + L-cysteinyl-[cysteine desulfurase] + A + AMP + diphosphate + H(+). It participates in tRNA modification. In terms of biological role, catalyzes the ATP-dependent 2-thiolation of cytidine in position 32 of tRNA, to form 2-thiocytidine (s(2)C32). The sulfur atoms are provided by the cysteine/cysteine desulfurase (IscS) system. In Deinococcus geothermalis (strain DSM 11300 / CIP 105573 / AG-3a), this protein is tRNA-cytidine(32) 2-sulfurtransferase.